The sequence spans 99 residues: Protein MOST-1 (99 aa).

In terms of assembly, interacts with TSPO, IGHM and IGHD. As to expression, expressed in the heart, kidney, liver, pancreas, small intestine, ovary, testis, prostate and thymus. Expressed in all of the cancer cell lines tested.

The protein resides in the cytoplasm. Its subcellular location is the microsome membrane. It is found in the endoplasmic reticulum membrane. Functionally, may be involved in cell survival, proliferation and progression of cancer cells. This is Protein MOST-1 (C8orf17) from Homo sapiens (Human).